The following is a 791-amino-acid chain: Nuclear cap-binding protein subunit 1-A (791 aa).

The interval 1–24 (MSRRRHSDENDGGQAHKRRKTSEP) is disordered. The 213-residue stretch at 28-240 (EDRLESLICR…CLWAQIQKLK (213 aa)) folds into the MIF4G domain. The stretch at 641 to 714 (LHSTIRKMNK…SEQKNLFLVI (74 aa)) forms a coiled coil. Positions 664-687 (QRLAKQHKHRDSDDNDEDSGRKDG) are disordered.

Belongs to the NCBP1 family. As to quaternary structure, component of the nuclear cap-binding complex (CBC), a heterodimer composed of ncbp1/cbp80 and ncbp2/cbp20 that interacts with m7GpppG-capped RNA. Component of an alternative nuclear cap-binding complex (CBC) composed of ncbp1/cbp80 and ncbp3.

The protein resides in the nucleus. It is found in the cytoplasm. In terms of biological role, component of the cap-binding complex (CBC), which binds cotranscriptionally to the 5'-cap of pre-mRNAs and is involved in various processes such as pre-mRNA splicing, translation regulation, nonsense-mediated mRNA decay, RNA-mediated gene silencing (RNAi) by microRNAs (miRNAs) and mRNA export. The CBC complex is involved in mRNA export from the nucleus, leading to the recruitment of the mRNA export machinery to the 5'-end of mRNA and to mRNA export in a 5' to 3' direction through the nuclear pore. The CBC complex is also involved in mediating U snRNA and intronless mRNAs export from the nucleus. The CBC complex is essential for a pioneer round of mRNA translation, before steady state translation when the CBC complex is replaced by cytoplasmic cap-binding protein eIF4E. The pioneer round of mRNA translation mediated by the CBC complex plays a central role in nonsense-mediated mRNA decay (NMD), NMD only taking place in mRNAs bound to the CBC complex, but not on eIF4E-bound mRNAs. The CBC complex enhances NMD in mRNAs containing at least one exon-junction complex (EJC), promoting the interaction between UPF1 and UPF2. The CBC complex is also involved in 'failsafe' NMD, which is independent of the EJC complex, while it does not participate in Staufen-mediated mRNA decay (SMD). During cell proliferation, the CBC complex is also involved in microRNAs (miRNAs) biogenesis via its interaction with SRRT/ARS2 and is required for miRNA-mediated RNA interference. The CBC complex also acts as a negative regulator of parn, thereby acting as an inhibitor of mRNA deadenylation. In the CBC complex, NCBP1/CBP80 does not bind directly capped RNAs (m7GpppG-capped RNA) but is required to stabilize the movement of the N-terminal loop of NCBP2/CBP20 and lock the CBC into a high affinity cap-binding state with the cap structure. Associates with NCBP3 to form an alternative cap-binding complex (CBC) which plays a key role in mRNA export. The conventional CBC with NCBP2 binds both small nuclear RNA (snRNA) and messenger (mRNA) and is involved in their export from the nucleus whereas the alternative CBC with NCBP3 does not bind snRNA and associates only with mRNA thereby playing a role only in mRNA export. The chain is Nuclear cap-binding protein subunit 1-A (ncbp1-a) from Xenopus laevis (African clawed frog).